The chain runs to 313 residues: Olfactory receptor 8B2 (313 aa).

The Extracellular segment spans residues 1–25 (MLARNNSLVTEFILAGLTDHPEFRQ). Residue Asn-5 is glycosylated (N-linked (GlcNAc...) asparagine). A helical transmembrane segment spans residues 26–46 (PLFFLFLVIYIVTMVGNLGLI). Residues 47-54 (TLFGLNSH) are Cytoplasmic-facing. A helical membrane pass occupies residues 55–75 (LHTPMYYFLFNLSFIDLCYSS). Residues 76-99 (VFTPKMLMNFVSKKNIISNVGCMT) lie on the Extracellular side of the membrane. Residues Cys-97 and Cys-189 are joined by a disulfide bond. A helical membrane pass occupies residues 100 to 120 (RLFFFLFFVISECYMLTSMAY). The Cytoplasmic segment spans residues 121–139 (DRYVAICNPLLYKVTMSHQ). Residues 140–160 (VCSMLTFAAYIMGLAGATAHT) form a helical membrane-spanning segment. At 161–197 (GCMLRLTFCSANIINHYLCDILPLLQLSCTSTYVNEV) the chain is on the extracellular side. A helical transmembrane segment spans residues 198–217 (VVLIVVGTNITVPSCTILIS). Residues 218–237 (YVFIVTSILHIKSTQGRSKA) are Cytoplasmic-facing. Residues 238–258 (FSTCSSHVIALSLFFGSAAFM) form a helical membrane-spanning segment. Topologically, residues 259–270 (YIKYSSGSMEQG) are extracellular. Residues 271 to 291 (KVSSVFYTNVVPMLNPLIYSL) form a helical membrane-spanning segment. The Cytoplasmic portion of the chain corresponds to 292–313 (RNKDVKVALRKALIKIQRRNIF).

This sequence belongs to the G-protein coupled receptor 1 family.

Its subcellular location is the cell membrane. Odorant receptor. The protein is Olfactory receptor 8B2 (OR8B2) of Homo sapiens (Human).